A 206-amino-acid polypeptide reads, in one-letter code: Small ribosomal subunit protein uS4 (206 aa).

The S4 RNA-binding domain occupies 96–156 (GRLDNVVYRM…EKAKKQSRVK (61 aa)).

Belongs to the universal ribosomal protein uS4 family. As to quaternary structure, part of the 30S ribosomal subunit. Contacts protein S5. The interaction surface between S4 and S5 is involved in control of translational fidelity.

Its function is as follows. One of the primary rRNA binding proteins, it binds directly to 16S rRNA where it nucleates assembly of the body of the 30S subunit. Functionally, with S5 and S12 plays an important role in translational accuracy. This is Small ribosomal subunit protein uS4 from Yersinia enterocolitica serotype O:8 / biotype 1B (strain NCTC 13174 / 8081).